A 223-amino-acid chain; its full sequence is DnaJ homolog subfamily B member 9 (223 aa).

Positions 1-23 (MATPQSIFIFAICILMITELILA) are cleaved as a signal peptide. One can recognise a J domain in the interval 26-90 (SYYDILGVPK…NRRKEYDTLG (65 aa)). The divergent targeting domain stretch occupies residues 91 to 223 (HSAFTNGKGQ…VTTYTDCSGQ (133 aa)). Ser133 is modified (phosphoserine).

As to quaternary structure, interacts with HSPA5/BiP; interaction is direct. Interacts with ERN1/IRE1 (via the luminal region). Interacts with DERL1.

The protein localises to the endoplasmic reticulum lumen. Co-chaperone for Hsp70 protein HSPA5/BiP that acts as a key repressor of the ERN1/IRE1-mediated unfolded protein response (UPR). J domain-containing co-chaperones stimulate the ATPase activity of Hsp70 proteins and are required for efficient substrate recognition by Hsp70 proteins. In the unstressed endoplasmic reticulum, interacts with the luminal region of ERN1/IRE1 and selectively recruits HSPA5/BiP: HSPA5/BiP disrupts the dimerization of the active ERN1/IRE1 luminal region, thereby inactivating ERN1/IRE1. Also involved in endoplasmic reticulum-associated degradation (ERAD) of misfolded proteins. Required for survival of B-cell progenitors and normal antibody production. The polypeptide is DnaJ homolog subfamily B member 9 (Pongo abelii (Sumatran orangutan)).